Consider the following 396-residue polypeptide: Ribosomal RNA large subunit methyltransferase I (396 aa).

The PUA domain occupies 2-79 (AIRIKLKPGR…REEEIDRAFF (78 aa)).

Belongs to the methyltransferase superfamily. RlmI family.

It localises to the cytoplasm. The enzyme catalyses cytidine(1962) in 23S rRNA + S-adenosyl-L-methionine = 5-methylcytidine(1962) in 23S rRNA + S-adenosyl-L-homocysteine + H(+). In terms of biological role, specifically methylates the cytosine at position 1962 (m5C1962) of 23S rRNA. In Shewanella putrefaciens (strain CN-32 / ATCC BAA-453), this protein is Ribosomal RNA large subunit methyltransferase I.